A 113-amino-acid polypeptide reads, in one-letter code: Kita-kyushu lung cancer antigen 1 (113 aa).

At 1–3 (MNF) the chain is on the cytoplasmic side. The chain crosses the membrane as a helical; Signal-anchor for type II membrane protein span at residues 4 to 21 (YLLLASSILCALIVFWKY). At 22–113 (RRFQRNTGEM…RGASPHRKST (92 aa)) the chain is on the extracellular side. An N-linked (GlcNAc...) asparagine glycan is attached at Asn-83.

As to expression, specifically expressed in testis. Expressed by cancer cell lines.

It localises to the cell membrane. The chain is Kita-kyushu lung cancer antigen 1 (CT83) from Homo sapiens (Human).